A 115-amino-acid chain; its full sequence is NADH-ubiquinone oxidoreductase chain 3 (115 aa).

Transmembrane regions (helical) follow at residues Leu3–Trp23, Phe55–Leu75, and Thr86–Trp106.

This sequence belongs to the complex I subunit 3 family. In terms of assembly, core subunit of respiratory chain NADH dehydrogenase (Complex I) which is composed of 45 different subunits. Interacts with TMEM186. Interacts with TMEM242.

The protein localises to the mitochondrion inner membrane. The catalysed reaction is a ubiquinone + NADH + 5 H(+)(in) = a ubiquinol + NAD(+) + 4 H(+)(out). Its function is as follows. Core subunit of the mitochondrial membrane respiratory chain NADH dehydrogenase (Complex I) which catalyzes electron transfer from NADH through the respiratory chain, using ubiquinone as an electron acceptor. Essential for the catalytic activity of complex I. This Mus musculus (Mouse) protein is NADH-ubiquinone oxidoreductase chain 3.